Consider the following 262-residue polypeptide: Acyl-[acyl-carrier-protein]--UDP-N-acetylglucosamine O-acyltransferase (262 aa).

This sequence belongs to the transferase hexapeptide repeat family. LpxA subfamily. Homotrimer.

The protein localises to the cytoplasm. The catalysed reaction is a (3R)-hydroxyacyl-[ACP] + UDP-N-acetyl-alpha-D-glucosamine = a UDP-3-O-[(3R)-3-hydroxyacyl]-N-acetyl-alpha-D-glucosamine + holo-[ACP]. It functions in the pathway glycolipid biosynthesis; lipid IV(A) biosynthesis; lipid IV(A) from (3R)-3-hydroxytetradecanoyl-[acyl-carrier-protein] and UDP-N-acetyl-alpha-D-glucosamine: step 1/6. Its function is as follows. Involved in the biosynthesis of lipid A, a phosphorylated glycolipid that anchors the lipopolysaccharide to the outer membrane of the cell. The polypeptide is Acyl-[acyl-carrier-protein]--UDP-N-acetylglucosamine O-acyltransferase (Shigella boydii serotype 18 (strain CDC 3083-94 / BS512)).